We begin with the raw amino-acid sequence, 160 residues long: Phosphatidylinositol N-acetylglucosaminyltransferase subunit gpi15 (160 aa).

2 consecutive transmembrane segments (helical) span residues Gly22–Ile42 and Ile48–Val68.

Belongs to the PIGH family.

The protein resides in the endoplasmic reticulum membrane. The catalysed reaction is a 1,2-diacyl-sn-glycero-3-phospho-(1D-myo-inositol) + UDP-N-acetyl-alpha-D-glucosamine = a 6-(N-acetyl-alpha-D-glucosaminyl)-1-(1,2-diacyl-sn-glycero-3-phospho)-1D-myo-inositol + UDP + H(+). Its pathway is glycolipid biosynthesis; glycosylphosphatidylinositol-anchor biosynthesis. Functionally, part of the complex catalyzing the transfer of N-acetylglucosamine from UDP-N-acetylglucosamine to phosphatidylinositol, the first step of GPI biosynthesis. This Schizosaccharomyces pombe (strain 972 / ATCC 24843) (Fission yeast) protein is Phosphatidylinositol N-acetylglucosaminyltransferase subunit gpi15 (gpi15).